The chain runs to 184 residues: Photosystem I assembly protein Ycf4 (184 aa).

2 helical membrane-spanning segments follow: residues 21 to 43 (NFCW…ISSY) and 68 to 90 (FYGI…NVGS).

This sequence belongs to the Ycf4 family.

It is found in the plastid. It localises to the chloroplast thylakoid membrane. Functionally, seems to be required for the assembly of the photosystem I complex. This chain is Photosystem I assembly protein Ycf4, found in Physcomitrium patens (Spreading-leaved earth moss).